The chain runs to 228 residues: Urease accessory protein UreF (228 aa).

This sequence belongs to the UreF family. As to quaternary structure, ureD, UreF and UreG form a complex that acts as a GTP-hydrolysis-dependent molecular chaperone, activating the urease apoprotein by helping to assemble the nickel containing metallocenter of UreC. The UreE protein probably delivers the nickel.

Its subcellular location is the cytoplasm. Functionally, required for maturation of urease via the functional incorporation of the urease nickel metallocenter. The polypeptide is Urease accessory protein UreF (Alkalilimnicola ehrlichii (strain ATCC BAA-1101 / DSM 17681 / MLHE-1)).